We begin with the raw amino-acid sequence, 298 residues long: Tyrosine recombinase XerC (298 aa).

The Core-binding (CB) domain maps to 1 to 85 (MKPIAAFQEY…SLRSFYRYLT (85 aa)). The region spanning 106–291 (HLPQFFYEAE…TMAHLKNEYM (186 aa)) is the Tyr recombinase domain. Active-site residues include Arg146, Lys170, His243, Arg246, and His269. Tyr278 functions as the O-(3'-phospho-DNA)-tyrosine intermediate in the catalytic mechanism.

The protein belongs to the 'phage' integrase family. XerC subfamily. In terms of assembly, forms a cyclic heterotetrameric complex composed of two molecules of XerC and two molecules of XerD.

It localises to the cytoplasm. Site-specific tyrosine recombinase, which acts by catalyzing the cutting and rejoining of the recombining DNA molecules. The XerC-XerD complex is essential to convert dimers of the bacterial chromosome into monomers to permit their segregation at cell division. It also contributes to the segregational stability of plasmids. The protein is Tyrosine recombinase XerC of Lacticaseibacillus paracasei (strain ATCC 334 / BCRC 17002 / CCUG 31169 / CIP 107868 / KCTC 3260 / NRRL B-441) (Lactobacillus paracasei).